A 359-amino-acid polypeptide reads, in one-letter code: Dual-specificity RNA methyltransferase RlmN (359 aa).

Catalysis depends on glutamate 98, which acts as the Proton acceptor. Residues 104–329 (EPKRGTLCIS…LEHGLTATIR (226 aa)) enclose the Radical SAM core domain. Residues cysteine 111 and cysteine 340 are joined by a disulfide bond. Positions 118, 122, and 125 each coordinate [4Fe-4S] cluster. S-adenosyl-L-methionine-binding positions include 166–167 (GE), serine 198, 220–222 (SLH), and asparagine 297. Cysteine 340 functions as the S-methylcysteine intermediate in the catalytic mechanism.

The protein belongs to the radical SAM superfamily. RlmN family. [4Fe-4S] cluster serves as cofactor.

It localises to the cytoplasm. It carries out the reaction adenosine(2503) in 23S rRNA + 2 reduced [2Fe-2S]-[ferredoxin] + 2 S-adenosyl-L-methionine = 2-methyladenosine(2503) in 23S rRNA + 5'-deoxyadenosine + L-methionine + 2 oxidized [2Fe-2S]-[ferredoxin] + S-adenosyl-L-homocysteine. The catalysed reaction is adenosine(37) in tRNA + 2 reduced [2Fe-2S]-[ferredoxin] + 2 S-adenosyl-L-methionine = 2-methyladenosine(37) in tRNA + 5'-deoxyadenosine + L-methionine + 2 oxidized [2Fe-2S]-[ferredoxin] + S-adenosyl-L-homocysteine. Its function is as follows. Specifically methylates position 2 of adenine 2503 in 23S rRNA and position 2 of adenine 37 in tRNAs. m2A2503 modification seems to play a crucial role in the proofreading step occurring at the peptidyl transferase center and thus would serve to optimize ribosomal fidelity. The sequence is that of Dual-specificity RNA methyltransferase RlmN from Halorhodospira halophila (strain DSM 244 / SL1) (Ectothiorhodospira halophila (strain DSM 244 / SL1)).